The sequence spans 298 residues: Putative olfactory receptor 10D4 (298 aa).

The Extracellular portion of the chain corresponds to 1–23 (MRNHTMVTEFILLGIPETEGLET). N-linked (GlcNAc...) asparagine glycosylation occurs at N3. A helical membrane pass occupies residues 24-44 (ALLFLFSSFYLCTLLGNVLIL). Residues 45–52 (TAIISSTR) lie on the Cytoplasmic side of the membrane. A helical transmembrane segment spans residues 53-73 (LHTPMYFFLGNLSIFDLGFSS). At 74 to 97 (TTVPKMLFYLSGNSHAISYAGCVS) the chain is on the extracellular side. A disulfide bond links C95 and C187. The helical transmembrane segment at 98 to 118 (QLFFYHFLGCTECFLYTVMAC) threads the bilayer. Residues 119 to 137 (DRFVAICFPLRYTVIMNHR) are Cytoplasmic-facing. A helical transmembrane segment spans residues 138–158 (VCFMLATGTWMIGCVHAMILT). At 159–195 (PLTFQLPYCGPNKVGYYFCDIPAVLPLACKDTSLAQR) the chain is on the extracellular side. The chain crosses the membrane as a helical span at residues 196-215 (VGFTNVGLLSLICFFLILVS). The Cytoplasmic portion of the chain corresponds to 216–235 (YTCIGISISKIRSAEGRQRA). Residues 236–256 (FSTCSAHLTAILCAYGPVIVI) traverse the membrane as a helical segment. The Extracellular segment spans residues 257–267 (YLQPNPSALLG). A helical transmembrane segment spans residues 268–288 (SIIQILNNLVTPMLNPLIYSL). Over 289 to 298 (RNKDVKSDQP) the chain is Cytoplasmic.

This sequence belongs to the G-protein coupled receptor 1 family.

The protein resides in the cell membrane. Odorant receptor. In Homo sapiens (Human), this protein is Putative olfactory receptor 10D4 (OR10D4P).